The primary structure comprises 320 residues: UDP-N-acetylenolpyruvoylglucosamine reductase (320 aa).

An FAD-binding PCMH-type domain is found at 34–200; sequence RAGGLAEVFF…TSAVFEGFAE (167 aa). Arginine 180 is a catalytic residue. The Proton donor role is filled by serine 229. The active site involves glutamate 299.

Belongs to the MurB family. FAD is required as a cofactor.

The protein resides in the cytoplasm. The catalysed reaction is UDP-N-acetyl-alpha-D-muramate + NADP(+) = UDP-N-acetyl-3-O-(1-carboxyvinyl)-alpha-D-glucosamine + NADPH + H(+). Its pathway is cell wall biogenesis; peptidoglycan biosynthesis. In terms of biological role, cell wall formation. This is UDP-N-acetylenolpyruvoylglucosamine reductase from Mesorhizobium japonicum (strain LMG 29417 / CECT 9101 / MAFF 303099) (Mesorhizobium loti (strain MAFF 303099)).